The following is a 359-amino-acid chain: Protein LpfD (359 aa).

An N-terminal signal peptide occupies residues Met-1 to Ala-24.

It belongs to the fimbrial protein family.

It is found in the fimbrium. The polypeptide is Protein LpfD (lpfD) (Salmonella typhimurium (strain LT2 / SGSC1412 / ATCC 700720)).